We begin with the raw amino-acid sequence, 294 residues long: Ribosomal protein L11 methyltransferase (294 aa).

Residues T146, G167, D189, and N231 each contribute to the S-adenosyl-L-methionine site.

The protein belongs to the methyltransferase superfamily. PrmA family.

It is found in the cytoplasm. The catalysed reaction is L-lysyl-[protein] + 3 S-adenosyl-L-methionine = N(6),N(6),N(6)-trimethyl-L-lysyl-[protein] + 3 S-adenosyl-L-homocysteine + 3 H(+). Functionally, methylates ribosomal protein L11. The chain is Ribosomal protein L11 methyltransferase from Aliivibrio fischeri (strain ATCC 700601 / ES114) (Vibrio fischeri).